Here is a 463-residue protein sequence, read N- to C-terminus: Glutamate--tRNA ligase (463 aa).

Residues 8-18 carry the 'HIGH' region motif; sequence PSPTGYLHIGG. The 'KMSKS' region motif lies at 236–240; that stretch reads RLSKR. K239 lines the ATP pocket.

Belongs to the class-I aminoacyl-tRNA synthetase family. Glutamate--tRNA ligase type 1 subfamily. As to quaternary structure, monomer.

It is found in the cytoplasm. The catalysed reaction is tRNA(Glu) + L-glutamate + ATP = L-glutamyl-tRNA(Glu) + AMP + diphosphate. Catalyzes the attachment of glutamate to tRNA(Glu) in a two-step reaction: glutamate is first activated by ATP to form Glu-AMP and then transferred to the acceptor end of tRNA(Glu). The chain is Glutamate--tRNA ligase from Nitrosomonas europaea (strain ATCC 19718 / CIP 103999 / KCTC 2705 / NBRC 14298).